Consider the following 131-residue polypeptide: MAGTKPSELGALKVGQYVVIDGIACRVMDTAHSKPGKHGGAKVRLTAMGIFEPVKKEHVGPASSRIDVPLIDKRKGQVLALMGEHVQIMDLETYETLELPMPTDVEGIDSGVEVEYFEAMDRYKITRVISK.

Lysine 37 is subject to Hypusine.

The protein belongs to the eIF-5A family.

It is found in the cytoplasm. Its function is as follows. Functions by promoting the formation of the first peptide bond. The chain is Translation initiation factor 5A from Methanococcus maripaludis (strain DSM 14266 / JCM 13030 / NBRC 101832 / S2 / LL).